We begin with the raw amino-acid sequence, 83 residues long: Sulfur carrier protein TusA (83 aa).

Residue cysteine 20 is the Cysteine persulfide intermediate of the active site.

It belongs to the sulfur carrier protein TusA family.

The protein localises to the cytoplasm. In terms of biological role, sulfur carrier protein which probably makes part of a sulfur-relay system. This Pseudoalteromonas atlantica (strain T6c / ATCC BAA-1087) protein is Sulfur carrier protein TusA.